The chain runs to 201 residues: Imidazoleglycerol-phosphate dehydratase (201 aa).

Belongs to the imidazoleglycerol-phosphate dehydratase family.

The protein localises to the cytoplasm. It carries out the reaction D-erythro-1-(imidazol-4-yl)glycerol 3-phosphate = 3-(imidazol-4-yl)-2-oxopropyl phosphate + H2O. It functions in the pathway amino-acid biosynthesis; L-histidine biosynthesis; L-histidine from 5-phospho-alpha-D-ribose 1-diphosphate: step 6/9. The chain is Imidazoleglycerol-phosphate dehydratase from Prochlorococcus marinus subsp. pastoris (strain CCMP1986 / NIES-2087 / MED4).